We begin with the raw amino-acid sequence, 1089 residues long: Ankyrin repeat and IBR domain-containing protein 1 (1089 aa).

Glycine 2 carries N-myristoyl glycine lipidation. ANK repeat units follow at residues 45 to 74 (QHNTPLHYAARHGMNKILGTFLGRDGNPNK) and 144 to 173 (KKNTPLHYAAASGMKACVELLVKHGGDLFA). The disordered stretch occupies residues 281–321 (CQRSGVQMPTPPPSGYNAWDTLPSPRTPRTTRSSVTSPDEI). Residues 303–318 (PSPRTPRTTRSSVTSP) show a composition bias toward low complexity. Residues 329–569 (DTSLCDICMC…GGYYRCTRYE (241 aa)) are TRIAD supradomain. Residues cysteine 333, cysteine 336, cysteine 351, histidine 353, cysteine 356, cysteine 359, cysteine 378, cysteine 383, cysteine 465, cysteine 468, histidine 473, cysteine 478, cysteine 519, and cysteine 522 each coordinate Zn(2+). The RING-type 1 zinc finger occupies 333 to 383 (CDICMCSISVFEDPVDMPCGHDFCRGCWESFLNLKIQEGEAHNIFCPAYDC). The IBR-type zinc finger occupies 401–478 (DKRYLQFDIK…LGEAHEPCDC (78 aa)). The RING-type 2; atypical zinc finger occupies 519 to 548 (CANCKSPIQKNEGCNHMQCAKCKYDFCWIC). Residue cysteine 532 is part of the active site. Zn(2+) contacts are provided by cysteine 537, cysteine 540, cysteine 545, cysteine 548, histidine 555, and cysteine 565. A coiled-coil region spans residues 575–640 (EEQSKEMTVE…RALKETEGGC (66 aa)). Serine 737 carries the phosphoserine modification. The segment at 776-821 (RRGDVHSLLSNPPDPDEPSESTLDIPEGGSSSRRPGTSVVSSASMS) is disordered. Residues 851 to 870 (EDDPNILLAIQLSLQESGLA) form the UIM domain. Residues serine 884 and serine 911 each carry the phosphoserine modification. Disordered regions lie at residues 889–912 (GTSLPSRLDSVPRNTDSPRAALSS), 927–964 (AENDPFSTDTLSSHPLSEARSDFCPSSSDPDSAGQDPN), and 1026–1089 (DASV…VHLV). 2 stretches are compositionally biased toward polar residues: residues 931–941 (PFSTDTLSSHP) and 1070–1082 (DVSSQTPQTSSDW).

It belongs to the RBR family.

It catalyses the reaction [E2 ubiquitin-conjugating enzyme]-S-ubiquitinyl-L-cysteine + [acceptor protein]-L-lysine = [E2 ubiquitin-conjugating enzyme]-L-cysteine + [acceptor protein]-N(6)-ubiquitinyl-L-lysine.. Might act as an E3 ubiquitin-protein ligase, or as part of E3 complex, which accepts ubiquitin from specific E2 ubiquitin-conjugating enzymes and then transfers it to substrates. In Homo sapiens (Human), this protein is Ankyrin repeat and IBR domain-containing protein 1 (ANKIB1).